We begin with the raw amino-acid sequence, 379 residues long: 23S rRNA (uracil(747)-C(5))-methyltransferase RlmC (379 aa).

[4Fe-4S] cluster is bound by residues Cys-3, Cys-11, Cys-14, and Cys-87. Residues Gln-212, Phe-241, Glu-262, and Asn-309 each coordinate S-adenosyl-L-methionine. Cys-336 serves as the catalytic Nucleophile.

Belongs to the class I-like SAM-binding methyltransferase superfamily. RNA M5U methyltransferase family. RlmC subfamily.

The catalysed reaction is uridine(747) in 23S rRNA + S-adenosyl-L-methionine = 5-methyluridine(747) in 23S rRNA + S-adenosyl-L-homocysteine + H(+). Functionally, catalyzes the formation of 5-methyl-uridine at position 747 (m5U747) in 23S rRNA. This is 23S rRNA (uracil(747)-C(5))-methyltransferase RlmC from Shewanella loihica (strain ATCC BAA-1088 / PV-4).